The sequence spans 437 residues: Ribosomal protein uS12 methylthiotransferase RimO (437 aa).

In terms of domain architecture, MTTase N-terminal spans 3–118 (KKFYITTLGC…AGKILREKFP (116 aa)). The [4Fe-4S] cluster site is built by Cys12, Cys48, Cys81, Cys157, Cys161, and Cys164. Residues 143 to 370 (NYSKPYAYVK…RDSHLEILEE (228 aa)) enclose the Radical SAM core domain. In terms of domain architecture, TRAM spans 373 to 437 (ESRIGRTYDA…YEYDMNGTWV (65 aa)).

The protein belongs to the methylthiotransferase family. RimO subfamily. [4Fe-4S] cluster serves as cofactor.

The protein localises to the cytoplasm. The catalysed reaction is L-aspartate(89)-[ribosomal protein uS12]-hydrogen + (sulfur carrier)-SH + AH2 + 2 S-adenosyl-L-methionine = 3-methylsulfanyl-L-aspartate(89)-[ribosomal protein uS12]-hydrogen + (sulfur carrier)-H + 5'-deoxyadenosine + L-methionine + A + S-adenosyl-L-homocysteine + 2 H(+). Its function is as follows. Catalyzes the methylthiolation of an aspartic acid residue of ribosomal protein uS12. This chain is Ribosomal protein uS12 methylthiotransferase RimO, found in Leptospira interrogans serogroup Icterohaemorrhagiae serovar Lai (strain 56601).